The primary structure comprises 1507 residues: Transient receptor potential cation channel subfamily M member 2 (1507 aa).

A compositionally biased stretch (basic and acidic residues) spans 1-11; it reads MEPLDQRRTDS. The disordered stretch occupies residues 1–24; the sequence is MEPLDQRRTDSDQEEGFGVQSRRA. Residues 1–751 lie on the Cytoplasmic side of the membrane; the sequence is MEPLDQRRTD…WWGQLCVDNG (751 aa). ADP-D-ribose contacts are provided by Thr173, Asn178, Arg301, Gly332, and Thr335. Thr739 is subject to Phosphothreonine. Residues 752–768 lie within the membrane without spanning it; that stretch reads LWRIILCMLAFPLLFTG. The Cytoplasmic segment spans residues 769 to 793; that stretch reads FISFREKRLQALCRLARVRAFFNAP. A helical membrane pass occupies residues 794 to 814; sequence VVIFYLNILSYFAFLCLFAYV. The Extracellular segment spans residues 815–825; sequence LMVDFQPSPSW. Residues 826-846 traverse the membrane as a helical segment; the sequence is CEYLIYLWLFSLVCEETRQLF. Residues Glu841 and Gln844 each contribute to the Ca(2+) site. Residues 847–865 lie on the Cytoplasmic side of the membrane; the sequence is YDPDGCGLMKMASLYFSDF. A helical membrane pass occupies residues 866–886; the sequence is WNKLDVGAILLFIAGLTCRLI. Asn867 is a Ca(2+) binding site. Topologically, residues 887–894 are extracellular; that stretch reads PATLYPGR. A helical transmembrane segment spans residues 895-915; sequence IILSLDFIMFCLRLMHIFTIS. At 916–927 the chain is on the cytoplasmic side; that stretch reads KTLGPKIIIVKR. The helical transmembrane segment at 928–948 threads the bilayer; that stretch reads MMKDVFFFLFLLAVWVVSFGV. Topologically, residues 949–968 are extracellular; sequence AKQAILIHNESRVDWIFRGV. Residues 969–983 constitute an intramembrane region (pore-forming); that stretch reads IYHSYLTIFGQIPTY. Positions 977–980 match the Selectivity filter motif; sequence FGQI. Topologically, residues 984–1020 are extracellular; sequence IDGVNFSMDQCSPNGTDPYKPKCPESDWTGQAPAFPE. Cys994 and Cys1006 are oxidised to a cystine. The chain crosses the membrane as a helical span at residues 1021-1042; sequence WLTVTLLCLYLLFANILLLNLL. Residues 1043–1077 are Cytoplasmic-facing; the sequence is IAMFNYTFQEVQEHTDQIWKFQRHDLIEEYHGRPP. A Ca(2+)-binding site is contributed by Glu1071. Residues 1078–1096 lie within the membrane without spanning it; sequence APPPLILLSHLQLLIKRIV. The Cytoplasmic segment spans residues 1097–1507; the sequence is LKIPAKRHKQ…KVASLFGAHF (411 aa). Residues 1351–1502 enclose the Nudix hydrolase domain; sequence RWKRNQGGGI…KKILQKVASL (152 aa). ADP-D-ribose is bound at residue Ser1379. A Nudix box motif is present at residues 1387–1408; that stretch reads GSREPGKMLPRKLKQVLQQEYW. ADP-D-ribose is bound by residues Asp1428, Arg1430, Tyr1489, and Asn1491.

It belongs to the transient receptor (TC 1.A.4) family. LTrpC subfamily. TRPM2 sub-subfamily. As to quaternary structure, homotetramer. Phosphorylation of TRPM2 at Thr-739 by protein kinase C (PKC) counteracts the effect of cytosolic Ca(2+) and elevates the temperature threshold. In terms of tissue distribution, detected in pancreas beta-cells. Detected in fetal brain cortex neurons (at protein level).

It localises to the cell membrane. The protein localises to the perikaryon. Its subcellular location is the cell projection. It is found in the cytoplasmic vesicle. The protein resides in the lysosome. It carries out the reaction Ca(2+)(in) = Ca(2+)(out). The catalysed reaction is Na(+)(in) = Na(+)(out). With respect to regulation, activated by intracellular ADP-ribose, beta-NAD (NAD(+)) and similar compounds, and by oxidative stress caused by reactive oxygen or nitrogen species. Ca(2+) and PI(4,5)P2 are required for channel opening by ADP-ribose. Activation by ADP-ribose and beta-NAD is strongly increased by moderate heat (35 to 40 degrees Celsius). Likewise, reactive oxygen species lower the threshold for activation by moderate heat (37 degrees Celsius). Activated by moderate heat (35 to 40 degrees Celsius). Inactivated by exposure to extracellular pH between 4.0 and 6.5; irreversibly inactivated when open channels are exposed to extracellular pH between 4.0 and 6.5, while pre-exposure of closed channels to extracellular pH 5.5 gives rise to currents that rapidly inactivate, but protects against irreversible inactivation. Inactivated by intracellular ATP. Activated by arachidonic acid. Inhibited by 2-aminoethyl diphenylborinate (2-APB). In terms of biological role, nonselective, voltage-independent cation channel that mediates Na(+) and Ca(2+) influx, leading to increased cytoplasmic Ca(2+) levels. Functions as a ligand-gated ion channel gated by intracellular adenosine diphosphate ribose (ADP-ribose), Ca(2+), warm temperature, and oxidative stress. The precise physiological activators are under debate; the true, physiological activators may be ADP-ribose and ADP-ribose-2'-phosphate. Binding of ADP-ribose to the cytoplasmic Nudix domain causes a conformation change; the channel is primed but still requires Ca(2+) binding to trigger channel opening. Extracellular Ca(2+) passes through the channel and increases channel activity. Also contributes to Ca(2+) release from intracellular stores in response to ADP-ribose. Plays a role in numerous processes that involve signaling via intracellular Ca(2+) levels. Besides, mediates the release of lysosomal Zn(2+) stores in response to reactive oxygen species, leading to increased cytosolic Zn(2+) levels. Plays a role in insulin secretion, a process that requires increased cytoplasmic Ca(2+) levels. Required for normal IFNG and cytokine secretion and normal innate immune immunity in response to bacterial infection. Required for normal phagocytosis and cytokine release by macrophages exposed to zymosan (in vitro). Plays a role in dendritic cell differentiation and maturation, and in dendritic cell chemotaxis via its role in regulating cytoplasmic Ca(2+) levels. Plays a role in the regulation of the reorganization of the actin cytoskeleton and filopodia formation in response to reactive oxygen species via its function in increasing cytoplasmic Ca(2+) and Zn(2+) levels. Confers susceptibility to cell death following oxidative stress. The sequence is that of Transient receptor potential cation channel subfamily M member 2 from Rattus norvegicus (Rat).